Consider the following 651-residue polypeptide: Acetyl-coenzyme A synthetase (651 aa).

CoA contacts are provided by residues 189-192 (RGGK), threonine 311, and asparagine 335. Residues 387-389 (GEP), 411-416 (DTWWQT), aspartate 500, and arginine 515 contribute to the ATP site. Serine 523 contributes to the CoA binding site. Position 526 (arginine 526) interacts with ATP. Mg(2+)-binding residues include valine 537, histidine 539, and valine 542. Arginine 584 contributes to the CoA binding site. Lysine 609 carries the post-translational modification N6-acetyllysine.

The protein belongs to the ATP-dependent AMP-binding enzyme family. The cofactor is Mg(2+). In terms of processing, acetylated. Deacetylation by the SIR2-homolog deacetylase activates the enzyme.

The enzyme catalyses acetate + ATP + CoA = acetyl-CoA + AMP + diphosphate. In terms of biological role, catalyzes the conversion of acetate into acetyl-CoA (AcCoA), an essential intermediate at the junction of anabolic and catabolic pathways. AcsA undergoes a two-step reaction. In the first half reaction, AcsA combines acetate with ATP to form acetyl-adenylate (AcAMP) intermediate. In the second half reaction, it can then transfer the acetyl group from AcAMP to the sulfhydryl group of CoA, forming the product AcCoA. The sequence is that of Acetyl-coenzyme A synthetase from Rhizobium etli (strain ATCC 51251 / DSM 11541 / JCM 21823 / NBRC 15573 / CFN 42).